We begin with the raw amino-acid sequence, 79 residues long: MADHASKIKDIIEKELGVEREKLTPEASFIEDLGADSLDIVELVMEFEKEFNIDIPDEDAEKLRTVGDAVAYLEAKVGG.

In terms of domain architecture, Carrier spans 2 to 77; that stretch reads ADHASKIKDI…DAVAYLEAKV (76 aa). Ser37 is subject to O-(pantetheine 4'-phosphoryl)serine.

This sequence belongs to the acyl carrier protein (ACP) family. 4'-phosphopantetheine is transferred from CoA to a specific serine of apo-ACP by AcpS. This modification is essential for activity because fatty acids are bound in thioester linkage to the sulfhydryl of the prosthetic group.

The protein resides in the cytoplasm. The protein operates within lipid metabolism; fatty acid biosynthesis. Carrier of the growing fatty acid chain in fatty acid biosynthesis. The protein is Acyl carrier protein of Gemmatimonas aurantiaca (strain DSM 14586 / JCM 11422 / NBRC 100505 / T-27).